The following is a 397-amino-acid chain: P2X purinoceptor 3 (397 aa).

Residues 1–20 lie on the Cytoplasmic side of the membrane; that stretch reads MNCISDFFTYETTKSVVVKS. Residues 21–43 traverse the membrane as a helical segment; the sequence is WTIGIINRAVQLLIISYFVGWVF. The Extracellular portion of the chain corresponds to 44–322; the sequence is LHEKAYQVRD…AGKFNIIPTI (279 aa). Residues Lys63 and Lys65 each contribute to the ATP site. 3 disulfide bridges follow: Cys107-Cys153, Cys116-Cys137, and Cys122-Cys147. Residue Glu111 coordinates Mg(2+). Residue Asn139 is glycosylated (N-linked (GlcNAc...) asparagine). Asp158 is a binding site for Mg(2+). Ca(2+) is bound at residue Asp158. Asn170 carries an N-linked (GlcNAc...) asparagine glycan. ATP is bound at residue Thr172. Asn194 carries N-linked (GlcNAc...) asparagine glycosylation. Cystine bridges form between Cys203-Cys213 and Cys247-Cys256. 3 residues coordinate ATP: Ser275, Asn279, and Arg281. Asn290 is a glycosylation site (N-linked (GlcNAc...) asparagine). Lys299 provides a ligand contact to ATP. Residues 323–341 traverse the membrane as a helical segment; that stretch reads ISSVAAFTSVGVGTVLCDI. The Cytoplasmic segment spans residues 342-397; it reads ILLNFLKGADHYKARKFEEVTETTLKGTASTNPVFTSDQATVEKQSTDSGAYSIGH.

This sequence belongs to the P2X receptor family. As to quaternary structure, homotrimer. Forms heterotrimer with P2RX2. Heterotrimeric P2RX2/3 has a ligand dose-response profile that is distinct from either homotrimeric P2RX2 or P2RX3.

The protein resides in the cell membrane. The enzyme catalyses Ca(2+)(in) = Ca(2+)(out). It carries out the reaction Na(+)(in) = Na(+)(out). With respect to regulation, has high sensitivity to ATP. Fast activation by external ATP. Exhibits rapid desensitization. Sensitives to the ATP agonist:alpha/beta-methylene-ATP. Subject to allosteric inhibition by AF-219. Mg(2+) and Ca(2+) slow deactivation of P2RX3. Functionally, extracellular ATP-activated non-selective cation channel. Plays particularly important role in sensory neurons where its activation is critical for gustatory, nociceptive responses, visceral reflexes and sensory hypersensitization. The sequence is that of P2X purinoceptor 3 (P2rx3) from Mus musculus (Mouse).